Here is a 359-residue protein sequence, read N- to C-terminus: Peptide chain release factor 1 (359 aa).

Residue glutamine 235 is modified to N5-methylglutamine. The segment at 285–305 (KRDSEISQMRKSQIGSGDRSE) is disordered. The segment covering 290-299 (ISQMRKSQIG) has biased composition (polar residues).

The protein belongs to the prokaryotic/mitochondrial release factor family. Methylated by PrmC. Methylation increases the termination efficiency of RF1.

The protein resides in the cytoplasm. In terms of biological role, peptide chain release factor 1 directs the termination of translation in response to the peptide chain termination codons UAG and UAA. This Ehrlichia canis (strain Jake) protein is Peptide chain release factor 1.